A 1098-amino-acid chain; its full sequence is Contactin-5 (1098 aa).

A signal peptide spans 1–23 (MASCWRLILFLSVTRWLSDYSEA). Ig-like C2-type domains are found at residues 98 to 189 (PVFV…ATLQ), 195 to 281 (NFSG…RVLS), 299 to 384 (PKIE…GQLQ), 389 to 473 (PHWV…AELK), 479 to 568 (PSFE…LSVK), and 570 to 659 (PTRI…DSVS). Cys-122 and Cys-172 form a disulfide bridge. Asn-137 and Asn-195 each carry an N-linked (GlcNAc...) asparagine glycan. Cystine bridges form between Cys-216–Cys-268 and Cys-321–Cys-368. Residues Asn-396, Asn-448, and Asn-539 are each glycosylated (N-linked (GlcNAc...) asparagine). Disulfide bonds link Cys-410–Cys-457, Cys-502–Cys-550, and Cys-592–Cys-649. Fibronectin type-III domains follow at residues 672–770 (PPGV…TNEA), 775–872 (APSN…SAEG), 877–971 (APTD…TKRH), and 976–1066 (PPGN…SYSG). N-linked (GlcNAc...) asparagine glycosylation is found at Asn-778, Asn-815, and Asn-930. Residues 956–982 (GYGPPSREASTTTKRHPPREPPGNLRW) are disordered. Asn-1001 carries an N-linked (GlcNAc...) asparagine glycan. The GPI-anchor amidated serine moiety is linked to residue Ser-1071. Positions 1072–1098 (AQSTLHSLSKWSSVTLLLALMLPSSSW) are cleaved as a propeptide — removed in mature form.

Belongs to the immunoglobulin superfamily. Contactin family. In terms of assembly, interacts with PTPRG. Expressed in the nervous system. Preferentially expressed in the central auditory pathways.

The protein resides in the cell membrane. Its function is as follows. Contactins mediate cell surface interactions during nervous system development. Has some neurite outgrowth-promoting activity in the cerebral cortical neurons but not in hippocampal neurons. Involved in neuronal activity in the auditory system. The protein is Contactin-5 (Cntn5) of Mus musculus (Mouse).